Reading from the N-terminus, the 147-residue chain is Methylglyoxal synthase (147 aa).

The region spanning 4-147 (VSVPATKRIA…LLNFELLCES (144 aa)) is the MGS-like domain. Substrate is bound by residues His-17, Lys-21, 43–46 (TGTT), and 63–64 (SG). The active-site Proton donor/acceptor is Asp-69. Residue His-96 coordinates substrate.

Belongs to the methylglyoxal synthase family.

The catalysed reaction is dihydroxyacetone phosphate = methylglyoxal + phosphate. Its function is as follows. Catalyzes the formation of methylglyoxal from dihydroxyacetone phosphate. In Leptospira borgpetersenii serovar Hardjo-bovis (strain JB197), this protein is Methylglyoxal synthase.